The following is a 378-amino-acid chain: Transcription factor YY2 (378 aa).

The interval 39–113 (LETSVGQTIE…DNLLFSPEFG (75 aa)) is mediates transcriptional activation. Residues 243–378 (EFTSMRPKKP…LTHVKNKNDQ (136 aa)) are mediates transcriptional repression. C2H2-type zinc fingers lie at residues 260–284 (IACS…LHIH), 289–311 (HVCA…QLVH), 317–341 (YQCT…VRIH), and 347–371 (FVCP…ILTH).

Belongs to the YY transcription factor family. As to expression, weakly expressed by neuronal and glial cells in the cerebral cortex. Expressed by Purkinje cells and in the granular layers of the cerebellum. Expressed in all layers of spermatocytes in testis but not detected in sperm cells.

It localises to the nucleus. Functionally, functions as a multifunctional transcription factor that may exhibit positive and negative control on a large number of genes. May antagonize YY1 and function in development and differentiation. The sequence is that of Transcription factor YY2 (Yy2) from Mus musculus (Mouse).